A 284-amino-acid chain; its full sequence is BTB/POZ domain-containing protein 2 (284 aa).

A BTB domain is found at 37-108 (SDTTLIIKGE…LYCDSPRIPA (72 aa)).

In terms of assembly, interacts with cul3.

The protein localises to the cytoplasm. Its subcellular location is the nucleus. It participates in protein modification; protein ubiquitination. Probable substrate-specific adapter of an E3 ubiquitin-protein ligase complex which mediates the ubiquitination and subsequent proteasomal degradation of target proteins. This is BTB/POZ domain-containing protein 2 (btb2) from Schizosaccharomyces pombe (strain 972 / ATCC 24843) (Fission yeast).